The chain runs to 462 residues: RuvB-like 2 (462 aa).

76–83 (GQPGTGKT) lines the ATP pocket.

It belongs to the RuvB family. As to quaternary structure, forms homohexameric rings. Can form a dodecamer with ruvbl2 made of two stacked hexameric rings. Is a component of the RNA polymerase II holoenzyme complex. Component of the chromatin-remodeling Ino80 complex. Component of some MLL1/MLL complex.

The protein resides in the nucleus. It is found in the dynein axonemal particle. The catalysed reaction is ATP + H2O = ADP + phosphate + H(+). In terms of biological role, has single-stranded DNA-stimulated ATPase and ATP-dependent DNA helicase (5' to 3') activity suggesting a role in nuclear processes such as recombination and transcription. Proposed core component of the chromatin remodeling INO80 complex which exhibits DNA- and nucleosome-activated ATPase activity and catalyzes ATP-dependent nucleosome sliding. Involved in the endoplasmic reticulum (ER)-associated degradation (ERAD) pathway where it negatively regulates expression of ER stress response genes. The chain is RuvB-like 2 (ruvbl2) from Xenopus laevis (African clawed frog).